We begin with the raw amino-acid sequence, 282 residues long: uncharacterized protein (282 aa).

Disordered stretches follow at residues 1–45 (MPLE…EEDE) and 201–259 (DRRR…KPWG). The segment covering 10–19 (SEMKEFKEST) has biased composition (basic and acidic residues). Over residues 26 to 38 (SVSSEETLTQSMV) the composition is skewed to polar residues. A compositionally biased stretch (basic and acidic residues) spans 201-237 (DRRRKEDSKARSRLTRREEHSEHHRSGKSRRERERRS).

This is an uncharacterized protein from Ostreid herpesvirus 1 (isolate France) (OsHV-1).